Reading from the N-terminus, the 414-residue chain is Inositol-tetrakisphosphate 1-kinase (414 aa).

K18 is a 1D-myo-inositol 1,3,4-trisphosphate binding site. Positions 106 and 157 each coordinate ATP. The 209-residue stretch at 117 to 325 (EAYMEDDRIC…IATVLQGQST (209 aa)) folds into the ATP-grasp domain. Positions 167 and 199 each coordinate 1D-myo-inositol 1,3,4-trisphosphate. Residues 188-199 (QNFINHNAVLYK), S214, S232, and S236 contribute to the ATP site. Positions 281, 295, and 297 each coordinate Mg(2+). N297 contributes to the 1D-myo-inositol 1,3,4-trisphosphate binding site. N6-acetyllysine; by EP300 and CREBBP occurs at positions 340 and 383. Residue S396 is modified to Phosphoserine. N6-acetyllysine; by EP300 and CREBBP is present on K410.

Belongs to the ITPK1 family. Monomer. Interacts with GPS1/COPS1. Mg(2+) is required as a cofactor. In terms of processing, acetylation by EP300 and CREBBP destabilizes ITPK1, and down-regulates enzymatic activity. Deacetylated by SIRT1. As to expression, expressed in brain &gt; heart &gt; skeletal muscle = kidney = pancreas = liver = placenta &gt; lung. In brain, it is expressed in cerebellum, cerebral cortex, medulla, spinal cord, occipital lobe, frontal lobe, temporal lobe and putamen.

The catalysed reaction is 1D-myo-inositol 3,4,5,6-tetrakisphosphate + ATP = 1D-myo-inositol 1,3,4,5,6-pentakisphosphate + ADP + H(+). The enzyme catalyses 1D-myo-inositol 1,3,4-trisphosphate + ATP = 1D-myo-inositol 1,3,4,5-tetrakisphosphate + ADP + H(+). It catalyses the reaction 1D-myo-inositol 1,3,4-trisphosphate + ATP = 1D-myo-inositol 1,3,4,6-tetrakisphosphate + ADP + H(+). It carries out the reaction 1D-myo-inositol 3,4,6-trisphosphate + ATP = 1D-myo-inositol 1,3,4,6-tetrakisphosphate + ADP + H(+). The catalysed reaction is 1D-myo-inositol 1,3,4-trisphosphate + 1D-myo-inositol 1,3,4,5,6-pentakisphosphate = 1D-myo-inositol 3,4,5,6-tetrakisphosphate + 1D-myo-inositol 1,3,4,6-tetrakisphosphate. The enzyme catalyses 1D-myo-inositol 1,3,4-trisphosphate + 1D-myo-inositol 1,3,4,5,6-pentakisphosphate = 1D-myo-inositol 3,4,5,6-tetrakisphosphate + 1D-myo-inositol 1,3,4,5-tetrakisphosphate. Kinase that can phosphorylate various inositol polyphosphate such as Ins(3,4,5,6)P4 or Ins(1,3,4)P3. Phosphorylates Ins(3,4,5,6)P4 at position 1 to form Ins(1,3,4,5,6)P5. This reaction is thought to have regulatory importance, since Ins(3,4,5,6)P4 is an inhibitor of plasma membrane Ca(2+)-activated Cl(-) channels, while Ins(1,3,4,5,6)P5 is not. Also phosphorylates Ins(1,3,4)P3 on O-5 and O-6 to form Ins(1,3,4,6)P4, an essential molecule in the hexakisphosphate (InsP6) pathway. Also acts as an inositol polyphosphate phosphatase that dephosphorylates Ins(1,3,4,5)P4 and Ins(1,3,4,6)P4 to Ins(1,3,4)P3, and Ins(1,3,4,5,6)P5 to Ins(3,4,5,6)P4. May also act as an isomerase that interconverts the inositol tetrakisphosphate isomers Ins(1,3,4,5)P4 and Ins(1,3,4,6)P4 in the presence of ADP and magnesium. Probably acts as the rate-limiting enzyme of the InsP6 pathway. Modifies TNF-alpha-induced apoptosis by interfering with the activation of TNFRSF1A-associated death domain. Plays an important role in MLKL-mediated necroptosis. Produces highly phosphorylated inositol phosphates such as inositolhexakisphosphate (InsP6) which bind to MLKL mediating the release of an N-terminal auto-inhibitory region leading to its activation. Essential for activated phospho-MLKL to oligomerize and localize to the cell membrane during necroptosis. The sequence is that of Inositol-tetrakisphosphate 1-kinase from Homo sapiens (Human).